The chain runs to 300 residues: Cholesterol 25-hydroxylase-like protein (300 aa).

A glycan (N-linked (GlcNAc...) asparagine) is linked at N9. The next 3 helical transmembrane spans lie at 54–73, 95–115, and 130–152; these read YTWV…VPFF, LQGW…LIWV, and MLSQ…HYIN. The Fatty acid hydroxylase domain maps to 135–266; that stretch reads AIFFLAFDFT…WFNYLDRLMG (132 aa). Residues 148–152 carry the Histidine box-1 motif; it reads FHYIN. A Histidine box-2 motif is present at residues 163 to 167; the sequence is HSVHH. The helical transmembrane segment at 192-212 threads the bilayer; that stretch reads ITTIPWIFPTHCLTYWIWFFI. The Histidine box-3 motif lies at 242-248; it reads AHDMHHL.

Belongs to the sterol desaturase family. Fe cation serves as cofactor.

Its subcellular location is the membrane. In terms of biological role, probable sterol desaturase. The chain is Cholesterol 25-hydroxylase-like protein from Caenorhabditis elegans.